The following is a 255-amino-acid chain: Adenosylcobinamide-GDP ribazoletransferase (255 aa).

A run of 6 helical transmembrane segments spans residues leucine 43–phenylalanine 63, proline 64–histidine 84, isoleucine 113–threonine 133, phenylalanine 141–tyrosine 161, leucine 195–phenylalanine 215, and cysteine 234–valine 254.

It belongs to the CobS family. It depends on Mg(2+) as a cofactor.

The protein localises to the cell inner membrane. It carries out the reaction alpha-ribazole + adenosylcob(III)inamide-GDP = adenosylcob(III)alamin + GMP + H(+). The catalysed reaction is alpha-ribazole 5'-phosphate + adenosylcob(III)inamide-GDP = adenosylcob(III)alamin 5'-phosphate + GMP + H(+). It functions in the pathway cofactor biosynthesis; adenosylcobalamin biosynthesis; adenosylcobalamin from cob(II)yrinate a,c-diamide: step 7/7. Its function is as follows. Joins adenosylcobinamide-GDP and alpha-ribazole to generate adenosylcobalamin (Ado-cobalamin). Also synthesizes adenosylcobalamin 5'-phosphate from adenosylcobinamide-GDP and alpha-ribazole 5'-phosphate. This is Adenosylcobinamide-GDP ribazoletransferase from Vibrio vulnificus (strain CMCP6).